Reading from the N-terminus, the 202-residue chain is dTTP/UTP pyrophosphatase (202 aa).

The active-site Proton acceptor is aspartate 71.

The protein belongs to the Maf family. YhdE subfamily. The cofactor is a divalent metal cation.

The protein localises to the cytoplasm. It carries out the reaction dTTP + H2O = dTMP + diphosphate + H(+). It catalyses the reaction UTP + H2O = UMP + diphosphate + H(+). Nucleoside triphosphate pyrophosphatase that hydrolyzes dTTP and UTP. May have a dual role in cell division arrest and in preventing the incorporation of modified nucleotides into cellular nucleic acids. The protein is dTTP/UTP pyrophosphatase of Zymomonas mobilis subsp. mobilis (strain ATCC 31821 / ZM4 / CP4).